The chain runs to 331 residues: Activator of 90 kDa heat shock protein ATPase homolog 2 (331 aa).

It belongs to the AHA1 family.

Co-chaperone that stimulates HSP90 ATPase activity. In Mus musculus (Mouse), this protein is Activator of 90 kDa heat shock protein ATPase homolog 2 (Ahsa2).